Reading from the N-terminus, the 204-residue chain is FlaA locus 22.9 kDa protein (204 aa).

The interval 115–140 (EKTAEDQKKSSEDHTEGSADSKASSE) is disordered.

This chain is FlaA locus 22.9 kDa protein (ylxF), found in Bacillus subtilis (strain 168).